Consider the following 70-residue polypeptide: Putative membrane protein insertion efficiency factor (70 aa).

It belongs to the UPF0161 family.

It is found in the cell membrane. In terms of biological role, could be involved in insertion of integral membrane proteins into the membrane. This Moorella thermoacetica (strain ATCC 39073 / JCM 9320) protein is Putative membrane protein insertion efficiency factor.